A 395-amino-acid polypeptide reads, in one-letter code: S-adenosylmethionine synthase (395 aa).

H15 contacts ATP. D17 is a Mg(2+) binding site. E43 contributes to the K(+) binding site. Residues E56 and Q99 each coordinate L-methionine. Positions 99–109 are flexible loop; that stretch reads QSPDIAMGVDE. Residues 173–175, 239–240, D248, 254–255, A271, and K275 each bind ATP; these read DGK, RF, and RK. Residue D248 coordinates L-methionine. Position 279 (K279) interacts with L-methionine.

The protein belongs to the AdoMet synthase family. As to quaternary structure, homotetramer; dimer of dimers. Requires Mg(2+) as cofactor. K(+) is required as a cofactor.

It localises to the cytoplasm. It carries out the reaction L-methionine + ATP + H2O = S-adenosyl-L-methionine + phosphate + diphosphate. It functions in the pathway amino-acid biosynthesis; S-adenosyl-L-methionine biosynthesis; S-adenosyl-L-methionine from L-methionine: step 1/1. Catalyzes the formation of S-adenosylmethionine (AdoMet) from methionine and ATP. The overall synthetic reaction is composed of two sequential steps, AdoMet formation and the subsequent tripolyphosphate hydrolysis which occurs prior to release of AdoMet from the enzyme. The chain is S-adenosylmethionine synthase from Desulforudis audaxviator (strain MP104C).